We begin with the raw amino-acid sequence, 216 residues long: Peroxiredoxin (216 aa).

Positions 2–158 (VVIGEKFPEV…ILRLVKALKI (157 aa)) constitute a Thioredoxin domain. Cys-46 (cysteine sulfenic acid (-SOH) intermediate) is an active-site residue. Residue Arg-121 participates in substrate binding. Cys-205 and Cys-211 are oxidised to a cystine.

Belongs to the peroxiredoxin family. Prx6 subfamily. In terms of assembly, homodecamer. Pentamer of dimers that assemble into a ring structure.

Its subcellular location is the cytoplasm. It catalyses the reaction a hydroperoxide + [thioredoxin]-dithiol = an alcohol + [thioredoxin]-disulfide + H2O. In terms of biological role, thiol-specific peroxidase that catalyzes the reduction of hydrogen peroxide and organic hydroperoxides to water and alcohols, respectively. Plays a role in cell protection against oxidative stress by detoxifying peroxides. The polypeptide is Peroxiredoxin (ahpC) (Pyrococcus horikoshii (strain ATCC 700860 / DSM 12428 / JCM 9974 / NBRC 100139 / OT-3)).